The sequence spans 89 residues: Small ribosomal subunit protein uS17 (89 aa).

It belongs to the universal ribosomal protein uS17 family. As to quaternary structure, part of the 30S ribosomal subunit.

Its function is as follows. One of the primary rRNA binding proteins, it binds specifically to the 5'-end of 16S ribosomal RNA. The protein is Small ribosomal subunit protein uS17 of Polaromonas naphthalenivorans (strain CJ2).